An 84-amino-acid chain; its full sequence is uncharacterized protein (84 aa).

A helical transmembrane segment spans residues Thr-13 to Leu-35. A coiled-coil region spans residues Leu-41–Lys-84.

The protein resides in the host membrane. This is an uncharacterized protein from Sulfolobus islandicus rod-shaped virus 1 (SIRV-1).